Consider the following 331-residue polypeptide: Putative peptidyl-prolyl cis-trans isomerase RC0542 (331 aa).

Positions 33-54 are disordered; the sequence is EQTASNNSSTDENQTSINNEPP. The PPIase FKBP-type domain maps to 128–226; sequence GHVVTVFYQI…SNEVKIYDDE (99 aa).

It carries out the reaction [protein]-peptidylproline (omega=180) = [protein]-peptidylproline (omega=0). The chain is Putative peptidyl-prolyl cis-trans isomerase RC0542 from Rickettsia conorii (strain ATCC VR-613 / Malish 7).